Reading from the N-terminus, the 552-residue chain is Cleavage and polyadenylation specificity factor subunit 6 (552 aa).

The interval 1–213 is necessary for interaction with NXF1; the sequence is MADGVDHIDI…RGRFPGAVPG (213 aa). Positions 81–161 constitute an RRM domain; it reads IALYIGNLTR…QNPVVTPCNK (81 aa). Residues 81–161 are necessary for interaction with NUDT21/CPSF5; sequence IALYIGNLTR…QNPVVTPCNK (81 aa). The segment at 81–161 is necessary for nuclear paraspeckles localization; the sequence is IALYIGNLTR…QNPVVTPCNK (81 aa). At T157 the chain carries Phosphothreonine. Over residues 169–180 the composition is skewed to polar residues; the sequence is MQSRKTTQSGQM. 2 disordered regions span residues 169 to 411 and 479 to 552; these read MQSR…PLSE and GIES…YRHR. The short motif at 202–206 is the GAR element; that stretch reads RGRGR. Over residues 207–219 the composition is skewed to low complexity; that stretch reads FPGAVPGGDRFPG. Pro residues-rich tracts occupy residues 220–265, 285–366, and 377–388; these read PTGP…PLAG, GQPP…PPPT, and GPPPTDPYGRPP. The span at 389–404 shows a compositional bias: basic and acidic residues; that stretch reads PYDRGDYGPPGREMDT. 2 positions are modified to phosphothreonine: T404 and T407. The segment at 404 to 552 is sufficient for nuclear speckle localization; it reads TARTPLSEAE…RDREREYRHR (149 aa). A necessary for RNA-binding region spans residues 405 to 552; that stretch reads ARTPLSEAEF…RDREREYRHR (148 aa). The tract at residues 481 to 552 is necessary for interaction with SRSF3, SRSF7 and TRA2B/SFRS10; sequence ESKSYGSGSR…RDREREYRHR (72 aa). The segment at 491–552 is arg/Ser-rich domain; it reads RRERSRERDH…RDREREYRHR (62 aa). Over residues 494–504 the composition is skewed to basic and acidic residues; that stretch reads RSRERDHSRSR. Residues S495, S501, S512, S514, and S526 each carry the phosphoserine modification. Basic residues predominate over residues 505–515; the sequence is EKSRRHKSRSR. The interval 511–552 is sufficient for nuclear targeting; it reads KSRSRDRHDDYYRERSRERERHRDRDRDRDRERDREREYRHR. Residues 516 to 552 show a composition bias toward basic and acidic residues; it reads DRHDDYYRERSRERERHRDRDRDRDRERDREREYRHR.

It belongs to the RRM CPSF6/7 family. Component of the cleavage factor Im (CFIm) complex which is a heterotetramer composed of two subunits of NUDT21/CPSF5 and two subunits of CPSF6 or CPSF7 or a heterodimer of CPSF6 and CPSF7. The cleavage factor Im (CFIm) complex associates with the CPSF and CSTF complexes to promote the assembly of the core mRNA 3'-processing machinery. Associates with the exon junction complex (EJC). Associates with the 80S ribosome particle. Interacts (via the RRM domain) with NUDT21/CPSF5; this interaction is direct and enhances binding to RNA. Interacts (via Arg/Ser-rich domain) with FIP1L1 (preferentially via unphosphorylated form and Arg/Glu/Asp-rich domain); this interaction mediates, at least in part, the interaction between the CFIm and CPSF complexes and may be inhibited by CPSF6 hyper-phosphorylation. Interacts (via N-terminus) with NXF1; this interaction is direct. Interacts with SRSF3. Interacts with SRSF7. Interacts with SNRNP70. Interacts with TRA2B/SFRS10. Interacts with UPF1. Interacts with UPF3B. Interacts with VIRMA. Interacts (via Arg/Ser-rich domain) with TNPO3; promoting nuclear import of CPSF6 independently of its phosphorylation status. Interacts with YTHDC1. Phosphorylated. Phosphorylated in the Arg/Ser-rich domain by SRPK1, in vitro. In terms of processing, symmetrically dimethylated on arginine residues in the GAR motif by PRMT5 in a WDR77- and CLNS1A-dependent manner. Asymmetrically dimethylated on arginine residues in the GAR motif by PRMT1.

The protein resides in the nucleus. Its subcellular location is the nucleoplasm. The protein localises to the nucleus speckle. It is found in the cytoplasm. Functionally, component of the cleavage factor Im (CFIm) complex that functions as an activator of the pre-mRNA 3'-end cleavage and polyadenylation processing required for the maturation of pre-mRNA into functional mRNAs. CFIm contributes to the recruitment of multiprotein complexes on specific sequences on the pre-mRNA 3'-end, so called cleavage and polyadenylation signals (pA signals). Most pre-mRNAs contain multiple pA signals, resulting in alternative cleavage and polyadenylation (APA) producing mRNAs with variable 3'-end formation. The CFIm complex acts as a key regulator of cleavage and polyadenylation site choice during APA through its binding to 5'-UGUA-3' elements localized in the 3'-untranslated region (UTR) for a huge number of pre-mRNAs. CPSF6 enhances NUDT21/CPSF5 binding to 5'-UGUA-3' elements localized upstream of pA signals and promotes RNA looping, and hence activates directly the mRNA 3'-processing machinery. Plays a role in mRNA export. This is Cleavage and polyadenylation specificity factor subunit 6 from Pongo abelii (Sumatran orangutan).